Reading from the N-terminus, the 455-residue chain is Probable glycine dehydrogenase (decarboxylating) subunit 1 (455 aa).

This sequence belongs to the GcvP family. N-terminal subunit subfamily. In terms of assembly, the glycine cleavage system is composed of four proteins: P, T, L and H. In this organism, the P 'protein' is a heterodimer of two subunits.

The enzyme catalyses N(6)-[(R)-lipoyl]-L-lysyl-[glycine-cleavage complex H protein] + glycine + H(+) = N(6)-[(R)-S(8)-aminomethyldihydrolipoyl]-L-lysyl-[glycine-cleavage complex H protein] + CO2. In terms of biological role, the glycine cleavage system catalyzes the degradation of glycine. The P protein binds the alpha-amino group of glycine through its pyridoxal phosphate cofactor; CO(2) is released and the remaining methylamine moiety is then transferred to the lipoamide cofactor of the H protein. The protein is Probable glycine dehydrogenase (decarboxylating) subunit 1 of Francisella tularensis subsp. holarctica (strain LVS).